A 494-amino-acid chain; its full sequence is Casein kinase I homolog HRR25 (494 aa).

The Protein kinase domain occupies 9-278 (FRIGRKIGSG…LARLFKDLSI (270 aa)). Residues 15–23 (IGSGSFGDI) and lysine 38 contribute to the ATP site. Aspartate 128 serves as the catalytic Proton acceptor. Serine 143 carries the post-translational modification Phosphoserine. Residues 394–494 (RQQQPQQQVQ…DKPAGQSIWL (101 aa)) are disordered. Composition is skewed to low complexity over residues 395–418 (QQQP…QQQP) and 432–444 (QQQQ…QQQQ). Positions 445–479 (VPMATTRATQYPPQINSNNFNTNQASVPPQMRSNP) are enriched in polar residues.

This sequence belongs to the protein kinase superfamily. CK1 Ser/Thr protein kinase family. Casein kinase I subfamily. As to quaternary structure, interacts with HRI1. Interacts with ELP1/IKI3; the interaction leads to ELP1/IKI3 phosphorylation.

The protein localises to the cytoplasm. It is found in the nucleus. It localises to the nucleolus. The protein resides in the nucleoplasm. The enzyme catalyses L-seryl-[protein] + ATP = O-phospho-L-seryl-[protein] + ADP + H(+). The catalysed reaction is L-threonyl-[protein] + ATP = O-phospho-L-threonyl-[protein] + ADP + H(+). Its function is as follows. Protein kinase which phosphorylates serine and threonine residues. Can use casein as a substrate. Phosphorylates elongator complex member ELP1/IKI3 on 'Ser-1198' and 'Ser-1202' which promotes the tRNA modification function of the complex. Associated with repair of damaged DNA and meiosis. This is Casein kinase I homolog HRR25 (HRR25) from Saccharomyces cerevisiae (strain ATCC 204508 / S288c) (Baker's yeast).